The primary structure comprises 427 residues: Histidinol dehydrogenase (427 aa).

Positions 123, 185, and 208 each coordinate NAD(+). Substrate contacts are provided by serine 231, glutamine 253, and histidine 256. Glutamine 253 and histidine 256 together coordinate Zn(2+). Active-site proton acceptor residues include glutamate 321 and histidine 322. Residues histidine 322, aspartate 355, glutamate 409, and histidine 414 each contribute to the substrate site. Aspartate 355 provides a ligand contact to Zn(2+). Histidine 414 serves as a coordination point for Zn(2+).

This sequence belongs to the histidinol dehydrogenase family. Zn(2+) is required as a cofactor.

The enzyme catalyses L-histidinol + 2 NAD(+) + H2O = L-histidine + 2 NADH + 3 H(+). It functions in the pathway amino-acid biosynthesis; L-histidine biosynthesis; L-histidine from 5-phospho-alpha-D-ribose 1-diphosphate: step 9/9. Its function is as follows. Catalyzes the sequential NAD-dependent oxidations of L-histidinol to L-histidinaldehyde and then to L-histidine. The chain is Histidinol dehydrogenase (hisD) from Bacillus subtilis (strain 168).